A 60-amino-acid polypeptide reads, in one-letter code: UPF0434 protein HCH_02705 (60 aa).

The protein belongs to the UPF0434 family.

The protein is UPF0434 protein HCH_02705 of Hahella chejuensis (strain KCTC 2396).